A 271-amino-acid polypeptide reads, in one-letter code: Methyltransferase psoC (271 aa).

Belongs to the methyltransferase superfamily. LaeA methyltransferase family.

It functions in the pathway secondary metabolite biosynthesis. Its function is as follows. Methyltransferase; part of the gene cluster that mediates the biosynthesis of pseurotin A, a competitive inhibitor of chitin synthase and an inducer of nerve-cell proliferation. The PKS-NRPS hybrid synthetase psoA is responsible for the biosynthesis of azaspirene, one of the first intermediates having the 1-oxa-7-azaspiro[4,4]-non-2-ene-4,6-dione core of pseurotin, via condensation of one acetyl-CoA, 4 malonyl-CoA, and a L-phenylalanine molecule. The dual-functional monooxygenase/methyltransferase psoF seems to be involved in the addition of the C3 methyl group onto the pseurotin scaffold. Azaspirene is then converted to synerazol through 4 steps including oxidation of C17 by the cytochrome P450 monooxygenase psoD, O-methylation of the hydroxy group of C8 by the methyltransferase psoC, and the trans-to-cis isomerization of the C13 olefin by the glutathione S-transferase psoE. The fourth step of synerazol production is performed by the dual-functional monooxygenase/methyltransferase psoF which seems to catalyze the epoxidation of the intermediate deepoxy-synerazol. Synerazol can be attacked by a water molecule nonenzymatically at two different positions to yield two diol products, pseurotin A and pseurotin D. The sequence is that of Methyltransferase psoC from Aspergillus fumigatus (strain ATCC MYA-4609 / CBS 101355 / FGSC A1100 / Af293) (Neosartorya fumigata).